The sequence spans 92 residues: Probable Fe(2+)-trafficking protein (92 aa).

It belongs to the Fe(2+)-trafficking protein family.

Functionally, could be a mediator in iron transactions between iron acquisition and iron-requiring processes, such as synthesis and/or repair of Fe-S clusters in biosynthetic enzymes. This is Probable Fe(2+)-trafficking protein from Anaeromyxobacter sp. (strain Fw109-5).